A 176-amino-acid chain; its full sequence is tRNA (adenine(37)-N6)-methyltransferase (176 aa).

One can recognise a TsaA-like domain in the interval 1–94; the sequence is SFSHIWVQFV…YLPFVEAQPD (94 aa). Residues histidine 12, 12-13, arginine 40, leucine 50, and 74-77 each bind S-adenosyl-L-methionine; these read HG and LDGT.

It belongs to the tRNA methyltransferase O family.

It carries out the reaction N(6)-L-threonylcarbamoyladenosine(37) in tRNA + S-adenosyl-L-methionine = N(6)-methyl,N(6)-L-threonylcarbamoyladenosine(37) in tRNA + S-adenosyl-L-homocysteine + H(+). Its function is as follows. S-adenosyl-L-methionine-dependent methyltransferase responsible for the addition of the methyl group in the formation of N6-methyl-N6-threonylcarbamoyladenosine at position 37 (m(6)t(6)A37) of the tRNA anticodon loop of tRNA(Thr)(GGU). The methyl group of m(6)t(6)A37 appears to slightly improve the efficiency of the tRNA decoding ability. Binds to tRNA. The polypeptide is tRNA (adenine(37)-N6)-methyltransferase (Eikenella corrodens).